The following is a 144-amino-acid chain: Maximins 8/H7 (144 aa).

Positions 1–18 (MKFKYIVAVSFLIASAYA) are cleaved as a signal peptide. The propeptide occupies 19–43 (RSEENDEQSLSQRDVLEEESLREIR). Residue Asn-70 is modified to Asparagine amide. Positions 74–123 (TAEDHEVMKRLEAVMRDLDSLDYPEEASERETRGFNQEEIANLFTKKEKR) are excised as a propeptide. A Leucine amide modification is found at Leu-143.

The protein belongs to the bombinin family. As to expression, expressed by the skin glands.

The protein localises to the secreted. Its function is as follows. Maximin-8 shows antimicrobial activity against bacteria and against the fungus C.albicans. It has little hemolytic activity. Functionally, maximin-H7 shows antimicrobial activity against bacteria and against the fungus C.albicans. Shows strong hemolytic activity. In Bombina maxima (Giant fire-bellied toad), this protein is Maximins 8/H7.